The sequence spans 380 residues: Anthranilate phosphoribosyltransferase (380 aa).

The 5-phospho-alpha-D-ribose 1-diphosphate site is built by glycine 109, asparagine 119, serine 121, threonine 122, lysine 142, serine 144, and serine 146. 2 residues coordinate Mg(2+): aspartate 258 and glutamate 259.

The protein belongs to the anthranilate phosphoribosyltransferase family. As to quaternary structure, homodimer. It depends on Mg(2+) as a cofactor.

It carries out the reaction N-(5-phospho-beta-D-ribosyl)anthranilate + diphosphate = 5-phospho-alpha-D-ribose 1-diphosphate + anthranilate. It participates in amino-acid biosynthesis; L-tryptophan biosynthesis; L-tryptophan from chorismate: step 2/5. Functionally, catalyzes the transfer of the phosphoribosyl group of 5-phosphorylribose-1-pyrophosphate (PRPP) to anthranilate to yield N-(5'-phosphoribosyl)-anthranilate (PRA), the second step in tryptophan biosynthesis. The sequence is that of Anthranilate phosphoribosyltransferase from Saccharomyces cerevisiae (strain ATCC 204508 / S288c) (Baker's yeast).